A 251-amino-acid chain; its full sequence is Mediator of RNA polymerase II transcription subunit 7 (251 aa).

The disordered stretch occupies residues 1–38 (MLPGFGAQTVSPFPNPPEYASAYTSDRINNGSAPPPPH). Polar residues predominate over residues 22–32 (AYTSDRINNGS).

Belongs to the Mediator complex subunit 7 family. As to quaternary structure, component of the Mediator complex. Interacts with mdt-10 and mdt-21. Interacts with RNA polymerase II.

Its subcellular location is the nucleus. Functionally, component of the Mediator complex, a coactivator involved in the regulated transcription of nearly all RNA polymerase II-dependent genes. Mediator functions as a bridge to convey information from gene-specific regulatory proteins to the basal RNA polymerase II transcription machinery. Mediator is recruited to promoters by direct interactions with regulatory proteins and serves as a scaffold for the assembly of a functional preinitiation complex with RNA polymerase II and the general transcription factors. Required for germ cell development and gonadal growth. This chain is Mediator of RNA polymerase II transcription subunit 7 (let-49), found in Caenorhabditis elegans.